Consider the following 472-residue polypeptide: Dihydrolipoyl dehydrogenase 2 (472 aa).

FAD contacts are provided by residues 39-47, Lys56, and Ala118; that span reads ERDAYGGTC. Cys47 and Cys52 are joined by a disulfide. NAD(+)-binding positions include 186 to 190, Glu209, and 275 to 278; these read GAGYI and AVGR. Residues Asp318 and Ala326 each coordinate FAD. His450 serves as the catalytic Proton acceptor.

It belongs to the class-I pyridine nucleotide-disulfide oxidoreductase family. Homodimer. FAD is required as a cofactor.

It is found in the cytoplasm. The catalysed reaction is N(6)-[(R)-dihydrolipoyl]-L-lysyl-[protein] + NAD(+) = N(6)-[(R)-lipoyl]-L-lysyl-[protein] + NADH + H(+). In Haloarcula marismortui (strain ATCC 43049 / DSM 3752 / JCM 8966 / VKM B-1809) (Halobacterium marismortui), this protein is Dihydrolipoyl dehydrogenase 2 (lpdA2).